The following is a 237-amino-acid chain: Increased recombination centers protein 6 (237 aa).

It belongs to the IRC6 family.

Functionally, involved in gross chromosomal rearrangements (GCRs) and telomere healing. The chain is Increased recombination centers protein 6 (IRC6) from Saccharomyces cerevisiae (strain ATCC 204508 / S288c) (Baker's yeast).